The chain runs to 938 residues: Isoleucine--tRNA ligase (938 aa).

A 'HIGH' region motif is present at residues 58–68 (PYANGSIHIGH). L-isoleucyl-5'-AMP is bound at residue E561. Positions 602 to 606 (KMSKS) match the 'KMSKS' region motif. Residue K605 participates in ATP binding. Zn(2+)-binding residues include C901, C904, C921, and C924.

The protein belongs to the class-I aminoacyl-tRNA synthetase family. IleS type 1 subfamily. Monomer. The cofactor is Zn(2+).

Its subcellular location is the cytoplasm. It carries out the reaction tRNA(Ile) + L-isoleucine + ATP = L-isoleucyl-tRNA(Ile) + AMP + diphosphate. Functionally, catalyzes the attachment of isoleucine to tRNA(Ile). As IleRS can inadvertently accommodate and process structurally similar amino acids such as valine, to avoid such errors it has two additional distinct tRNA(Ile)-dependent editing activities. One activity is designated as 'pretransfer' editing and involves the hydrolysis of activated Val-AMP. The other activity is designated 'posttransfer' editing and involves deacylation of mischarged Val-tRNA(Ile). The sequence is that of Isoleucine--tRNA ligase from Baumannia cicadellinicola subsp. Homalodisca coagulata.